The chain runs to 228 residues: Putative N-acetylmannosamine-6-phosphate 2-epimerase (228 aa).

This sequence belongs to the NanE family.

The catalysed reaction is an N-acyl-D-glucosamine 6-phosphate = an N-acyl-D-mannosamine 6-phosphate. It participates in amino-sugar metabolism; N-acetylneuraminate degradation; D-fructose 6-phosphate from N-acetylneuraminate: step 3/5. Converts N-acetylmannosamine-6-phosphate (ManNAc-6-P) to N-acetylglucosamine-6-phosphate (GlcNAc-6-P). This chain is Putative N-acetylmannosamine-6-phosphate 2-epimerase, found in Mycoplasmopsis pulmonis (strain UAB CTIP) (Mycoplasma pulmonis).